The chain runs to 327 residues: Glycerol-3-phosphate dehydrogenase [NAD(P)+] (327 aa).

Residues Ser-10, Phe-11, Arg-31, and Lys-108 each contribute to the NADPH site. 3 residues coordinate sn-glycerol 3-phosphate: Lys-108, Gly-136, and Ser-138. Ala-140 provides a ligand contact to NADPH. Sn-glycerol 3-phosphate-binding residues include Lys-191, Asp-246, Ser-256, Arg-257, and Asn-258. The Proton acceptor role is filled by Lys-191. Arg-257 is an NADPH binding site. Residues Leu-281 and Glu-283 each contribute to the NADPH site.

The protein belongs to the NAD-dependent glycerol-3-phosphate dehydrogenase family.

Its subcellular location is the cytoplasm. It carries out the reaction sn-glycerol 3-phosphate + NAD(+) = dihydroxyacetone phosphate + NADH + H(+). The catalysed reaction is sn-glycerol 3-phosphate + NADP(+) = dihydroxyacetone phosphate + NADPH + H(+). It participates in membrane lipid metabolism; glycerophospholipid metabolism. Functionally, catalyzes the reduction of the glycolytic intermediate dihydroxyacetone phosphate (DHAP) to sn-glycerol 3-phosphate (G3P), the key precursor for phospholipid synthesis. The protein is Glycerol-3-phosphate dehydrogenase [NAD(P)+] of Ehrlichia ruminantium (strain Gardel).